The chain runs to 559 residues: Cation/calcium exchanger 2 (559 aa).

13 helical membrane-spanning segments follow: residues Phe-10–Thr-30, Gly-86–Leu-106, Val-131–Val-151, Thr-167–Leu-187, Ile-203–Asn-223, Phe-224–Ser-244, Trp-331–Trp-351, Ala-362–Ala-382, Trp-393–Ala-413, Leu-416–Leu-436, Phe-480–Ile-500, Leu-506–Ser-526, and Leu-531–Ile-551.

The protein belongs to the Ca(2+):cation antiporter (CaCA) (TC 2.A.19) family. Cation/calcium exchanger (CCX) subfamily.

The protein localises to the membrane. In terms of biological role, membrane-localized H(+)-dependent K(+) and Na(+) transporter. The sequence is that of Cation/calcium exchanger 2 (CCX2) from Arabidopsis thaliana (Mouse-ear cress).